The sequence spans 447 residues: MLTGVIEGFYGRDWRRDERATVMDWIAAAGMNTYIYGPKDDVHVRARWRVPYDAAGLARLTELRDAAAARGMVFYVSLAPCLDVTYSDPQDRAALLARVDQLARAGLRNLVLLFDDIPSVLPEADRHRFDSFAEAQADLSNMVLRHLRGAGHVVFCPTEYCGRMAGGDPRGSAYLQRLGSTLDPAIDIFWTGPEIVSEEIVAAHLAAVGEVLRRRPVIWDNFHANDYDIRRVFAGPLGGRSRDILPLVAGWITNPNNEAEANFPAIHTTGAYLADPDYAPERAIAAAVAAWQPRFRLAFGDGAVPSDLVALLCDLFWQPFALGPETTRILSALRAALTVPRPDPSDPAWRAALEDLRDLKRRINKLFTLMTEIENRDLFHTFHNYLWEAQEEVGHLVAYCDWLDEAPPPGAVFPATDRIHNFYRRGFGVAVQDILQRDRQGRYHHGV.

The GH84 domain occupies 1 to 277 (MLTGVIEGFY…TTGAYLADPD (277 aa)). A protein is bound by residues glycine 8, lysine 39, and aspartate 115. Residue aspartate 116 is the Proton donor of the active site. Residues tyrosine 160, 219–221 (WDN), aspartate 226, and asparagine 254 contribute to the a protein site.

The protein belongs to the glycosyl hydrolase 84 family.

It catalyses the reaction 3-O-(N-acetyl-beta-D-glucosaminyl)-L-seryl-[protein] + H2O = N-acetyl-D-glucosamine + L-seryl-[protein]. The catalysed reaction is 3-O-(N-acetyl-beta-D-glucosaminyl)-L-threonyl-[protein] + H2O = L-threonyl-[protein] + N-acetyl-D-glucosamine. Its activity is regulated as follows. Inhibited by PUGNac (O-(2-acetamido-2-deoxy-D-glucopyranosylidene)amino-N-phenylcarbamate). Cleaves GlcNAc from O-glycosylated proteins. Can use p-nitrophenyl-beta-GlcNAc and 4-methylumbelliferone-GlcNAc as substrate (in vitro). This Oceanicola granulosus (strain ATCC BAA-861 / DSM 15982 / KCTC 12143 / HTCC2516) protein is Protein O-GlcNAcase.